The sequence spans 448 residues: Bifunctional F420 biosynthesis protein FbiB (448 aa).

Residues methionine 1–glycine 244 are coenzyme F420:L-glutamate ligase. Residues leucine 20 to phenylalanine 23, serine 50, and lysine 55 each bind GTP. Residue aspartate 109 participates in a divalent metal cation binding. Asparagine 112 is a GTP binding site. Residues aspartate 150 and threonine 151 each coordinate a divalent metal cation. The dehydro-coenzyme F420-0 reductase stretch occupies residues threonine 245 to lysine 448. FMN-binding positions include arginine 260–arginine 264 and alanine 288. Residue aspartate 320 participates in coenzyme F420-(gamma-Glu)n binding. 2 residues coordinate FMN: glycine 399 and arginine 436.

This sequence in the N-terminal section; belongs to the CofE family. The cofactor is Mg(2+). Mn(2+) serves as cofactor. K(+) is required as a cofactor.

It catalyses the reaction oxidized coenzyme F420-0 + GTP + L-glutamate = oxidized coenzyme F420-1 + GDP + phosphate + H(+). It carries out the reaction oxidized coenzyme F420-1 + GTP + L-glutamate = oxidized coenzyme F420-2 + GDP + phosphate + H(+). The catalysed reaction is oxidized coenzyme F420-(gamma-L-Glu)(n) + GTP + L-glutamate = oxidized coenzyme F420-(gamma-L-Glu)(n+1) + GDP + phosphate + H(+). The enzyme catalyses oxidized coenzyme F420-0 + FMN + H(+) = dehydro coenzyme F420-0 + FMNH2. Its pathway is cofactor biosynthesis; coenzyme F420 biosynthesis. Bifunctional enzyme that catalyzes the GTP-dependent successive addition of multiple gamma-linked L-glutamates to the L-lactyl phosphodiester of 7,8-didemethyl-8-hydroxy-5-deazariboflavin (F420-0) to form polyglutamated F420 derivatives, and the FMNH2-dependent reduction of dehydro-F420-0 to form F420-0. This chain is Bifunctional F420 biosynthesis protein FbiB, found in Mycobacterium tuberculosis (strain ATCC 25177 / H37Ra).